The primary structure comprises 218 residues: Insulin-induced gene 2 protein (218 aa).

Residues 1–21 (MGETDNAPRGPPSFLPHKMNL) lie on the Cytoplasmic side of the membrane. Residues 22-44 (LLRGLLLFLIGVFLALVLNLLQV) form a helical membrane-spanning segment. The Lumenal segment spans residues 45 to 63 (QRNVTLFPPDVLSSLFSSA). A helical membrane pass occupies residues 64–81 (WWVPLCCGTAAAAIGLLY). At 82 to 96 (PCIDRHLGEPHKFKR) the chain is on the cytoplasmic side. The chain crosses the membrane as a helical span at residues 97–119 (EWSSVMRCVAVFVGINHASAKVD). The Lumenal portion of the chain corresponds to 120 to 122 (FAN). The helical transmembrane segment at 123–141 (NTQLSLTLAALSIGLWWTF) threads the bilayer. Residues 142 to 146 (DRSRS) are Cytoplasmic-facing. A helical transmembrane segment spans residues 147 to 168 (GLGLGIGISFFATVVSQLLVYN). The Lumenal portion of the chain corresponds to 169 to 182 (GVYEYTAPDFLYVR). Residues 183 to 200 (SWLPCIFFAGGITMGNIG) form a helical membrane-spanning segment. Topologically, residues 201-218 (RQLEMYERLALVEKSHRD) are cytoplasmic. The KxHxx motif lies at 212 to 218 (VEKSHRD).

This sequence belongs to the INSIG family. As to quaternary structure, interacts with scap; interaction is direct and only takes place in the presence of sterols; it prevents interaction between scap and the coat protein complex II (COPII). Associates with the SCAP-SREBP complex; association is mediated via its interaction with scap and only takes place in the presence of sterols.

It localises to the endoplasmic reticulum membrane. Oxysterol-binding protein that mediates feedback control of cholesterol synthesis by controlling both endoplasmic reticulum to Golgi transport of scap and degradation of hmgcr. Acts as a negative regulator of cholesterol biosynthesis by mediating the retention of the SCAP-SREBP complex in the endoplasmic reticulum, thereby blocking the processing of sterol regulatory element-binding proteins (SREBPs). Binds oxysterol, including 22-hydroxycholesterol, 24-hydroxycholesterol, 25-hydroxycholesterol and 27-hydroxycholesterol, regulating interaction with scap and retention of the SCAP-SREBP complex in the endoplasmic reticulum. In presence of oxysterol, interacts with scap, retaining the SCAP-SREBP complex in the endoplasmic reticulum, thereby preventing scap from escorting SREBPs to the Golgi. Sterol deprivation reduce oxysterol-binding, disrupting the interaction between insig2 and scap, thereby promoting Golgi transport of the SCAP-SREBP complex, followed by processing and nuclear translocation of SREBPs. Also regulates cholesterol synthesis by regulating degradation of hmgcr. The protein is Insulin-induced gene 2 protein of Xenopus tropicalis (Western clawed frog).